The following is a 77-amino-acid chain: U8-lycotoxin-Ls1t (77 aa).

The signal sequence occupies residues 1-20 (MKLIIFTGLVLFAIVSLIEA). A propeptide spanning residues 21–26 (QAENEK) is cleaved from the precursor.

This sequence belongs to the neurotoxin 19 (CSTX) family. 08 (U8-Lctx) subfamily. Post-translationally, contains 4 disulfide bonds. As to expression, expressed by the venom gland.

It localises to the secreted. The sequence is that of U8-lycotoxin-Ls1t from Lycosa singoriensis (Wolf spider).